Reading from the N-terminus, the 591-residue chain is Probable Xaa-Pro aminopeptidase PEPP (591 aa).

The disordered stretch occupies residues 31–59 (SIHSPPPSVSAATHGGVKNPSFSQRRTSG). Mn(2+)-binding residues include D322 and D333. The segment covering 441-450 (GLSRQAISGS) has biased composition (low complexity). Residues 441–460 (GLSRQAISGSRRLPPPRNMK) are disordered. Positions 511 and 552 each coordinate Mn(2+).

Belongs to the peptidase M24B family. The cofactor is Mn(2+).

The enzyme catalyses Release of any N-terminal amino acid, including proline, that is linked to proline, even from a dipeptide or tripeptide.. Catalyzes the removal of a penultimate prolyl residue from the N-termini of peptides. The chain is Probable Xaa-Pro aminopeptidase PEPP (PEPP) from Sordaria macrospora (strain ATCC MYA-333 / DSM 997 / K(L3346) / K-hell).